The chain runs to 141 residues: Hemoglobin subunit alpha-A (141 aa).

The Globin domain occupies Val-1–Arg-141. Position 58 (His-58) interacts with O2. His-87 provides a ligand contact to heme b.

This sequence belongs to the globin family. Heterotetramer of two alpha chains and two beta chains. In terms of tissue distribution, red blood cells.

Its function is as follows. Involved in oxygen transport from the lung to the various peripheral tissues. The chain is Hemoglobin subunit alpha-A (HBAA) from Streptopelia orientalis (Eastern turtle dove).